Here is a 313-residue protein sequence, read N- to C-terminus: 4-hydroxy-3-methylbut-2-enyl diphosphate reductase (313 aa).

A [4Fe-4S] cluster-binding site is contributed by C12. (2E)-4-hydroxy-3-methylbut-2-enyl diphosphate contacts are provided by H41 and H74. Dimethylallyl diphosphate is bound by residues H41 and H74. The isopentenyl diphosphate site is built by H41 and H74. [4Fe-4S] cluster is bound at residue C96. Residue H124 participates in (2E)-4-hydroxy-3-methylbut-2-enyl diphosphate binding. Position 124 (H124) interacts with dimethylallyl diphosphate. H124 serves as a coordination point for isopentenyl diphosphate. The Proton donor role is filled by E126. (2E)-4-hydroxy-3-methylbut-2-enyl diphosphate is bound at residue T164. Residue C194 participates in [4Fe-4S] cluster binding. S222, S223, N224, and S266 together coordinate (2E)-4-hydroxy-3-methylbut-2-enyl diphosphate. Dimethylallyl diphosphate contacts are provided by S222, S223, N224, and S266. Isopentenyl diphosphate contacts are provided by S222, S223, N224, and S266.

The protein belongs to the IspH family. It depends on [4Fe-4S] cluster as a cofactor.

The catalysed reaction is isopentenyl diphosphate + 2 oxidized [2Fe-2S]-[ferredoxin] + H2O = (2E)-4-hydroxy-3-methylbut-2-enyl diphosphate + 2 reduced [2Fe-2S]-[ferredoxin] + 2 H(+). It carries out the reaction dimethylallyl diphosphate + 2 oxidized [2Fe-2S]-[ferredoxin] + H2O = (2E)-4-hydroxy-3-methylbut-2-enyl diphosphate + 2 reduced [2Fe-2S]-[ferredoxin] + 2 H(+). Its pathway is isoprenoid biosynthesis; dimethylallyl diphosphate biosynthesis; dimethylallyl diphosphate from (2E)-4-hydroxy-3-methylbutenyl diphosphate: step 1/1. It functions in the pathway isoprenoid biosynthesis; isopentenyl diphosphate biosynthesis via DXP pathway; isopentenyl diphosphate from 1-deoxy-D-xylulose 5-phosphate: step 6/6. In terms of biological role, catalyzes the conversion of 1-hydroxy-2-methyl-2-(E)-butenyl 4-diphosphate (HMBPP) into a mixture of isopentenyl diphosphate (IPP) and dimethylallyl diphosphate (DMAPP). Acts in the terminal step of the DOXP/MEP pathway for isoprenoid precursor biosynthesis. This Protochlamydia amoebophila (strain UWE25) protein is 4-hydroxy-3-methylbut-2-enyl diphosphate reductase.